The chain runs to 546 residues: Smad protein daf-8 (546 aa).

Residues 16-137 (AMAQKVLEET…YRWVELPTCQ (122 aa)) form the MH1 domain. 2 disordered regions span residues 234–268 (LQQS…FIPN) and 292–317 (ENFS…PIEP). Residues 292–302 (ENFSSENNGNR) are compositionally biased toward polar residues. Positions 349–546 (WLKLIYYEEG…APPRICSSRT (198 aa)) constitute an MH2 domain.

The protein belongs to the dwarfin/SMAD family. In terms of assembly, homodimer. Interacts with R-SMAD daf-14 and co-SMAD daf-3. Interacts with orphan nuclear receptor nhr-69. In terms of tissue distribution, expressed in the excretory cell and gonadal distal tip cells (DTCs).

It localises to the cytoplasm. Its subcellular location is the nucleus. Functionally, probably a receptor-regulated SMAD (R-SMAD) that is an intracellular signal transducer and transcriptional modulator activated by TGF-beta-like daf-7 signaling. Plays a role in TGF-beta-like daf-7 signaling in regulating entry into a developmentally arrested larval state known as dauer, in response to harsh environmental conditions; partially redundant with R-SMAD daf-14. Plays a role in inhibiting mitosis and promoting a switch to meiosis in the germ line, perhaps by down-regulating lag-2 transcription in the gonadal distal tip cells (DTCs). In cooperation with orphan nuclear receptor nhr-69 modulates the Insulin/IGF-1-like signaling (IIS) pathway, perhaps by regulating expression of the potassium channel exp-2, which in turn modulates the secretion of the insulin-like peptide daf-28. In Caenorhabditis elegans, this protein is Smad protein daf-8.